We begin with the raw amino-acid sequence, 520 residues long: Bifunctional purine biosynthesis protein PurH (520 aa).

The MGS-like domain occupies 1-150 (MSDDRKAIKR…KNHPSVAVVV (150 aa)).

It belongs to the PurH family.

It carries out the reaction (6R)-10-formyltetrahydrofolate + 5-amino-1-(5-phospho-beta-D-ribosyl)imidazole-4-carboxamide = 5-formamido-1-(5-phospho-D-ribosyl)imidazole-4-carboxamide + (6S)-5,6,7,8-tetrahydrofolate. The catalysed reaction is IMP + H2O = 5-formamido-1-(5-phospho-D-ribosyl)imidazole-4-carboxamide. Its pathway is purine metabolism; IMP biosynthesis via de novo pathway; 5-formamido-1-(5-phospho-D-ribosyl)imidazole-4-carboxamide from 5-amino-1-(5-phospho-D-ribosyl)imidazole-4-carboxamide (10-formyl THF route): step 1/1. The protein operates within purine metabolism; IMP biosynthesis via de novo pathway; IMP from 5-formamido-1-(5-phospho-D-ribosyl)imidazole-4-carboxamide: step 1/1. In Corynebacterium glutamicum (strain ATCC 13032 / DSM 20300 / JCM 1318 / BCRC 11384 / CCUG 27702 / LMG 3730 / NBRC 12168 / NCIMB 10025 / NRRL B-2784 / 534), this protein is Bifunctional purine biosynthesis protein PurH.